Here is a 292-residue protein sequence, read N- to C-terminus: Phosphatidylserine decarboxylase proenzyme (292 aa).

Catalysis depends on charge relay system; for autoendoproteolytic cleavage activity residues Asp-98, His-153, and Ser-254. Ser-254 (schiff-base intermediate with substrate; via pyruvic acid; for decarboxylase activity) is an active-site residue. Position 254 is a pyruvic acid (Ser); by autocatalysis (Ser-254).

Belongs to the phosphatidylserine decarboxylase family. PSD-B subfamily. Prokaryotic type I sub-subfamily. Heterodimer of a large membrane-associated beta subunit and a small pyruvoyl-containing alpha subunit. Pyruvate is required as a cofactor. Is synthesized initially as an inactive proenzyme. Formation of the active enzyme involves a self-maturation process in which the active site pyruvoyl group is generated from an internal serine residue via an autocatalytic post-translational modification. Two non-identical subunits are generated from the proenzyme in this reaction, and the pyruvate is formed at the N-terminus of the alpha chain, which is derived from the carboxyl end of the proenzyme. The autoendoproteolytic cleavage occurs by a canonical serine protease mechanism, in which the side chain hydroxyl group of the serine supplies its oxygen atom to form the C-terminus of the beta chain, while the remainder of the serine residue undergoes an oxidative deamination to produce ammonia and the pyruvoyl prosthetic group on the alpha chain. During this reaction, the Ser that is part of the protease active site of the proenzyme becomes the pyruvoyl prosthetic group, which constitutes an essential element of the active site of the mature decarboxylase.

The protein resides in the cell membrane. It carries out the reaction a 1,2-diacyl-sn-glycero-3-phospho-L-serine + H(+) = a 1,2-diacyl-sn-glycero-3-phosphoethanolamine + CO2. The protein operates within phospholipid metabolism; phosphatidylethanolamine biosynthesis; phosphatidylethanolamine from CDP-diacylglycerol: step 2/2. In terms of biological role, catalyzes the formation of phosphatidylethanolamine (PtdEtn) from phosphatidylserine (PtdSer). The protein is Phosphatidylserine decarboxylase proenzyme of Halorhodospira halophila (strain DSM 244 / SL1) (Ectothiorhodospira halophila (strain DSM 244 / SL1)).